The sequence spans 483 residues: MPVITRFAPSPTGFLHIGGARTALFNWLYAKHTGGKMLLRIEDTDRERSTEAAVKAIIDGLHWMGLSYDGDPISQFERAERHRQVAEQLVKDGKAYYCYASPEELAEIRENARAEGRPPRYDGRWRERDISKAPKDIKPVIRIKAPQDGETIVHDRVQGDVRFPNKDLDDFIILRSDGSPTYMHAVVVDDHDMGVTHIIRGDDHLTNAARQTIIFNAMGWDIPVMAHIPLIHGENGAKLSKRHGALGVAAYRKMGYLPAALRNYLVRLGWSHGDDELMSIEDMISWFDIDDINKGAARFDLKKLDAINGHYIRMSNNQDLFDAALHILKEIEGGLQIMERLDEQRRAQFLKAIPNLKERSKTLCELIDNASFIFTKRPLQLDEKAQTLLDKNGLAILKVIYLALKACPSWDVKSLDETLRSYAQTQDLKFGSIAQPLRAALTGRLTSPGVFDVLVLLGRDESLNRINDQLVTTACSLHTNQCI.

The short motif at 9–19 (PSPTGFLHIGG) is the 'HIGH' region element. Residues 238 to 242 (KLSKR) carry the 'KMSKS' region motif. K241 provides a ligand contact to ATP.

The protein belongs to the class-I aminoacyl-tRNA synthetase family. Glutamate--tRNA ligase type 1 subfamily. In terms of assembly, monomer.

Its subcellular location is the cytoplasm. It carries out the reaction tRNA(Glu) + L-glutamate + ATP = L-glutamyl-tRNA(Glu) + AMP + diphosphate. In terms of biological role, catalyzes the attachment of glutamate to tRNA(Glu) in a two-step reaction: glutamate is first activated by ATP to form Glu-AMP and then transferred to the acceptor end of tRNA(Glu). In Bartonella henselae (strain ATCC 49882 / DSM 28221 / CCUG 30454 / Houston 1) (Rochalimaea henselae), this protein is Glutamate--tRNA ligase 1.